Reading from the N-terminus, the 391-residue chain is 1-deoxy-D-xylulose 5-phosphate reductoisomerase (391 aa).

NADPH contacts are provided by Thr-11, Gly-12, Ser-13, Ile-14, Gly-37, Asn-39, and Asn-125. 1-deoxy-D-xylulose 5-phosphate is bound at residue Lys-126. Residue Glu-127 participates in NADPH binding. Asp-151 is a Mn(2+) binding site. Ser-152, Glu-153, Ser-176, and His-199 together coordinate 1-deoxy-D-xylulose 5-phosphate. Residue Glu-153 participates in Mn(2+) binding. NADPH is bound at residue Gly-205. 4 residues coordinate 1-deoxy-D-xylulose 5-phosphate: Ser-212, Asn-217, Lys-218, and Glu-221. Residue Glu-221 participates in Mn(2+) binding.

Belongs to the DXR family. It depends on Mg(2+) as a cofactor. Mn(2+) serves as cofactor.

It carries out the reaction 2-C-methyl-D-erythritol 4-phosphate + NADP(+) = 1-deoxy-D-xylulose 5-phosphate + NADPH + H(+). The protein operates within isoprenoid biosynthesis; isopentenyl diphosphate biosynthesis via DXP pathway; isopentenyl diphosphate from 1-deoxy-D-xylulose 5-phosphate: step 1/6. Catalyzes the NADPH-dependent rearrangement and reduction of 1-deoxy-D-xylulose-5-phosphate (DXP) to 2-C-methyl-D-erythritol 4-phosphate (MEP). This Heliobacterium modesticaldum (strain ATCC 51547 / Ice1) protein is 1-deoxy-D-xylulose 5-phosphate reductoisomerase.